A 493-amino-acid chain; its full sequence is Cytochrome c-552 (493 aa).

Residues 1–25 (MEKKLKSWQGWLLFCGAMAVVFVLG) form the signal peptide. Residue H116 coordinates heme c. Heme is bound by residues C144, C147, and K148. Positions 182, 185, 186, 224, 227, and 228 each coordinate heme c. Ca(2+)-binding residues include E230, Y231, K276, and Q278. Residue Y231 participates in substrate binding. H279 contacts substrate. Positions 290, 297, 300, 301, 315, 328, 331, 332, and 407 each coordinate heme c.

This sequence belongs to the cytochrome c-552 family. Ca(2+) serves as cofactor. It depends on heme c as a cofactor.

The protein resides in the periplasm. It catalyses the reaction 6 Fe(III)-[cytochrome c] + NH4(+) + 2 H2O = 6 Fe(II)-[cytochrome c] + nitrite + 8 H(+). Its pathway is nitrogen metabolism; nitrate reduction (assimilation). In terms of biological role, catalyzes the reduction of nitrite to ammonia, consuming six electrons in the process. This Bacteroides fragilis (strain YCH46) protein is Cytochrome c-552.